We begin with the raw amino-acid sequence, 270 residues long: Putative pyruvate, phosphate dikinase regulatory protein 2 (270 aa).

151–158 serves as a coordination point for ADP; the sequence is GVSRTSKT.

It belongs to the pyruvate, phosphate/water dikinase regulatory protein family. PDRP subfamily.

The enzyme catalyses N(tele)-phospho-L-histidyl/L-threonyl-[pyruvate, phosphate dikinase] + ADP = N(tele)-phospho-L-histidyl/O-phospho-L-threonyl-[pyruvate, phosphate dikinase] + AMP + H(+). It catalyses the reaction N(tele)-phospho-L-histidyl/O-phospho-L-threonyl-[pyruvate, phosphate dikinase] + phosphate + H(+) = N(tele)-phospho-L-histidyl/L-threonyl-[pyruvate, phosphate dikinase] + diphosphate. Functionally, bifunctional serine/threonine kinase and phosphorylase involved in the regulation of the pyruvate, phosphate dikinase (PPDK) by catalyzing its phosphorylation/dephosphorylation. This Listeria monocytogenes serovar 1/2a (strain ATCC BAA-679 / EGD-e) protein is Putative pyruvate, phosphate dikinase regulatory protein 2.